The sequence spans 492 residues: Protein GvpD2 (492 aa).

Residue 39–46 coordinates ATP; that stretch reads GAPGTGKT. A compositionally biased stretch (basic and acidic residues) spans 355–368; sequence RDHDDAVDPDRLPG. The tract at residues 355 to 379 is disordered; it reads RDHDDAVDPDRLPGHDTTPTEHGTL.

This sequence belongs to the gas vesicle GvpD family. Homodimer. Interacts with GvpE, also with GvpE from H.mediterranei.

The protein localises to the cytoplasm. Functionally, causes a decrease in the amount of GvpE protein. Gas vesicles are hollow, gas filled proteinaceous nanostructures found in several microbial planktonic microorganisms. They allow positioning of halobacteria at the optimal depth for growth in the poorly aerated, shallow brine pools of their habitat. Expression of 2 c-vac DNA fragments containing 2 divergently transcribed regions (gvpE-gvpF-gvpG-gvpH-gvpI-gvpJ-gvpK-gvpL-gvpM and gvpA-gvpC-gvpN-gvpO) allows H.volcanii to produce gas vesicles. This Halobacterium salinarum (strain ATCC 700922 / JCM 11081 / NRC-1) (Halobacterium halobium) protein is Protein GvpD2.